Consider the following 298-residue polypeptide: MATH domain and coiled-coil domain-containing protein At3g58280 (298 aa).

Residues 9 to 128 form the MATH domain; sequence KKTFGWVIKD…NGEITIIAEV (120 aa). A coiled-coil region spans residues 240–288; the sequence is NLDWLRQKFDQALEKQIAYDTRIGELEKQVKKRKLAVTELEADLEKEKA.

This chain is MATH domain and coiled-coil domain-containing protein At3g58280, found in Arabidopsis thaliana (Mouse-ear cress).